We begin with the raw amino-acid sequence, 257 residues long: MQKLESRGVILFNRNYRENDKLVKIFTKQAGKRMFFVRGGGSGKLSAVIQPLNIAEFMMTVNDEGLSFIEDYSQAESFKEITSDIFKLSYATYLAALTDAAIADGVVDAELFAFLEKTLVLMEEGLDYEILTNIFEIQVLDRFGVRLNFHECVFCHRVGLPFDFSYKFSGLLCPNHYEEDERRSHLDPNVPYLLDRFQGLSFEELRSISVKDEMKRKLRQFIDELYDNYVGIHLKSKKFIDNLNSWGHIMSKEDNAD.

This sequence belongs to the RecO family.

In terms of biological role, involved in DNA repair and RecF pathway recombination. This is DNA repair protein RecO from Streptococcus thermophilus (strain ATCC BAA-491 / LMD-9).